Consider the following 181-residue polypeptide: Oligoribonuclease (181 aa).

The Exonuclease domain maps to 8–171 (LIWIDLEMTG…DDIRESVAEL (164 aa)). Residue Tyr-129 is part of the active site.

The protein belongs to the oligoribonuclease family.

The protein localises to the cytoplasm. Functionally, 3'-to-5' exoribonuclease specific for small oligoribonucleotides. The protein is Oligoribonuclease of Yersinia pseudotuberculosis serotype O:1b (strain IP 31758).